The sequence spans 340 residues: Annexin A2-A (340 aa).

A P10 binding site region spans residues 2–25 (ALIHEILGKLSLEGNQSCARQSAL). 4 Annexin repeats span residues 34 to 105 (FDAE…GLIK), 106 to 177 (TRPQ…ALAK), 190 to 262 (EKID…NLVQ), and 266 to 337 (NKPL…NLCG).

Belongs to the annexin family. In terms of assembly, tetramer of 2 light chains (p10 proteins) and 2 heavy chains (p36 proteins).

It is found in the secreted. The protein resides in the extracellular space. It localises to the extracellular matrix. The protein localises to the basement membrane. Functionally, calcium-regulated membrane-binding protein whose affinity for calcium is greatly enhanced by anionic phospholipids. It binds two calcium ions with high affinity. The chain is Annexin A2-A (anxa2-a) from Xenopus laevis (African clawed frog).